A 257-amino-acid chain; its full sequence is Ribonuclease HII (257 aa).

One can recognise an RNase H type-2 domain in the interval 72–257; it reads TYIAGIDEVG…FAPIKDMIQK (186 aa). The a divalent metal cation site is built by Asp78, Glu79, and Asp170.

This sequence belongs to the RNase HII family. It depends on Mn(2+) as a cofactor. Mg(2+) serves as cofactor.

The protein resides in the cytoplasm. The catalysed reaction is Endonucleolytic cleavage to 5'-phosphomonoester.. Endonuclease that specifically degrades the RNA of RNA-DNA hybrids. This Bacillus cereus (strain ZK / E33L) protein is Ribonuclease HII.